The chain runs to 155 residues: MDGQDKASYLDTNKDELPSTIKELAAALGIPLQDCSVPCNFCGNFLDFLELCEFDKKRLCLIWKNYVVTACCRCCCVATATFEFNEYYEQTVLGRDIELATGRSIFEIDVRCQNCLSFLDIIEKLDCCGRGRPFHKVRGGWKGVCRLCKHLYHDW.

2 zinc fingers span residues 39 to 75 (CNFCGNFLDFLELCEFDKKRLCLIWKNYVVTACCRCC) and 112 to 148 (CQNCLSFLDIIEKLDCCGRGRPFHKVRGGWKGVCRLC).

This sequence belongs to the papillomaviridae E6 protein family. As to quaternary structure, forms homodimers. Interacts with ubiquitin-protein ligase UBE3A/E6-AP; this interaction stimulates UBE3A ubiquitin activity. Interacts with host BAK1.

It is found in the host cytoplasm. The protein localises to the host nucleus. Its function is as follows. Plays a major role in the induction and maintenance of cellular transformation. E6 associates with host UBE3A/E6-AP ubiquitin-protein ligase and modulates its activity. Protects host keratinocytes from apoptosis by mediating the degradation of host BAK1. May also inhibit host immune response. This chain is Protein E6, found in Homo sapiens (Human).